The following is a 479-amino-acid chain: Glutamyl-tRNA(Gln) amidotransferase subunit A (479 aa).

Residues K75 and S150 each act as charge relay system in the active site. S174 functions as the Acyl-ester intermediate in the catalytic mechanism.

This sequence belongs to the amidase family. GatA subfamily. As to quaternary structure, heterotrimer of A, B and C subunits.

It catalyses the reaction L-glutamyl-tRNA(Gln) + L-glutamine + ATP + H2O = L-glutaminyl-tRNA(Gln) + L-glutamate + ADP + phosphate + H(+). Functionally, allows the formation of correctly charged Gln-tRNA(Gln) through the transamidation of misacylated Glu-tRNA(Gln) in organisms which lack glutaminyl-tRNA synthetase. The reaction takes place in the presence of glutamine and ATP through an activated gamma-phospho-Glu-tRNA(Gln). This chain is Glutamyl-tRNA(Gln) amidotransferase subunit A, found in Synechococcus sp. (strain ATCC 27144 / PCC 6301 / SAUG 1402/1) (Anacystis nidulans).